A 91-amino-acid chain; its full sequence is Small ribosomal subunit protein uS15 (91 aa).

Belongs to the universal ribosomal protein uS15 family. As to quaternary structure, part of the 30S ribosomal subunit. Forms a bridge to the 50S subunit in the 70S ribosome, contacting the 23S rRNA.

Functionally, one of the primary rRNA binding proteins, it binds directly to 16S rRNA where it helps nucleate assembly of the platform of the 30S subunit by binding and bridging several RNA helices of the 16S rRNA. Its function is as follows. Forms an intersubunit bridge (bridge B4) with the 23S rRNA of the 50S subunit in the ribosome. The polypeptide is Small ribosomal subunit protein uS15 (Legionella pneumophila (strain Corby)).